A 476-amino-acid chain; its full sequence is Trigger factor (476 aa).

The 88-residue stretch at 174–261 (GDIAVVSFKG…LKDLKEKELP (88 aa)) folds into the PPIase FKBP-type domain. The disordered stretch occupies residues 436–476 (KENTTKTSKTTKNSKTTKATKTTKTTKTTKTSKTQNKKEKK). Residues 440–469 (TKTSKTTKNSKTTKATKTTKTTKTTKTSKT) show a composition bias toward low complexity.

It belongs to the FKBP-type PPIase family. Tig subfamily.

It localises to the cytoplasm. It catalyses the reaction [protein]-peptidylproline (omega=180) = [protein]-peptidylproline (omega=0). In terms of biological role, involved in protein export. Acts as a chaperone by maintaining the newly synthesized protein in an open conformation. Functions as a peptidyl-prolyl cis-trans isomerase. This Prochlorococcus marinus (strain MIT 9215) protein is Trigger factor.